The sequence spans 353 residues: F-box protein At2g14290 (353 aa).

Positions Pro-6 to Leu-58 constitute an F-box domain.

The chain is F-box protein At2g14290 from Arabidopsis thaliana (Mouse-ear cress).